The primary structure comprises 1630 residues: MDVETQEIRQARQRASVKWLLSKAFNNRVPDNLKEPFYRDHENQERLKPQIIVELGNATLYCQTLANLYSDPNYQSMNHWSIIQTLARKGVPVAESADMPITETVLIQTNPLRINAHMSVIESLMVLYAKEISSGDRVMAAIRRISGNNYQAPTGQSYEQALLGWISHACAALKKRIIKEVDAGLPDDNGSRLQTPDIPPVRDFQDLCDGICLALLISYYCPKVVPWTSVRINYLPAVEDSIHNILLVCNFSQKHLPYTVMHMTPEDVTYMRGSMKLNLVVLLTDLFNLFEIHPAKCVCYPGMDGQVPHSNSFGGGLNRRSTPPNEYQTVQSNNFDGNHAEAFVVHKSRGITTLASMHSQQQQQLHQQQQHQQQYHQQPLQQHPSQSQLQIQQQEPLVPARLRQAKEKTNVESKADERGRRSRRNSSSEDSQLTIENFGGSQDQLNTLGRYERDRERKLSNTSVGSYPVEPAVAVRSSIADARGTLQLGYDTDSGSEKQDRETEKYSMRRQVSVDNVPTVSSHNLSNAGSPLPVARHKQHSSDKDYSSNSGMTPDAYNDSRSTSGYDPESTPVRKSSTSSMPASPAAWQLDVGDDDMRSLENASKLSTIRMKLEEKRRRIEQDKRKIEMALLRHQEKEDLESCPDVMKWETMSNESKRTPDMDPVDLDKYQQSIAIMNMNLQDIQQDIHRLATQQSQMQAQHLQAQQLMQAQQIANMLNQAYNAPVSAYSSRPPSRDPYQQQLHHQQQQPMPMPQPMQYVNEHGQYMSPPQPAHYMPQQAQQPQSIYSDNGAAYNHSNHSPYGGTPQYRSSVVYDDYGQPTNHFYLHESSPQPQAHQHPQRRTWAHSAAAAAYEQQQQIQPSLVDVNAWQTQQHQKQKQTWMNRPPSSAGAPSPGSFMLHQNGGGGGGGGGGGELQHLFQVQASPQHGQRQVSGSNGVQRQQSLTNLRDNRSPKAPQNMGMPMGMPMQQEDMMAPQSICFIGDEEDVDELERNIIESMQSTHISDFVHQQQQQHQHQQQLQQQQRLQGHSGRGSSSEDYDSGEMISNKLNITSGNLTYRIPSPSRPSIQANSFQDPRAMAAASGGEDQPPEKGFYISFDDEQPKRPKPPLRAKRSPKKESPPGSRDSVDNQATLKRESLSHLHNNNNIGFGNDDVNSKPVTRHSIHGLNNSNSVKSPGNATYNKYTDEPPIQLRQLAVSGAMSPTSNERHHLDDVSNQSPQQTQQPMSPTRLQQSSNNAEAAKNKALVIGADSTNLDPESVDEMERRKEKIMLLSLQRRQQQEEAKARKEIEASQKREKEREKEEERARKKEEQMARRAAILEQHRLKKAIEEAEREGKTLDRPDLHVKLQSHSSTSTTPRLRQQRTTRPRPKTIHVDDASVDISEASSISSRGKKGSSSNLTGYGQLSSNSMKRDYYRGSQDSLTVKESPDDYPSTSSTPIGRRGSYKTSREPAGVERGRTLSRISVAKGSTLNFRGRKSNSLMNLCGPKLYKQPAAKSNRGIILNAVEYCVFPGVVNREAKQKVLEKIARSEAKHFLVLFRDAGCQFRALYSYQPETDQVTKLYGTGPSQVEEVMFDKFFKYNSGGKCFSQVHTKHLTVTIDAFTIHNSLWQGKRVQLPSKKDMALVI.

The Calponin-homology (CH) domain occupies 156–288 (QSYEQALLGW…LVVLLTDLFN (133 aa)). Disordered regions lie at residues 311 to 333 (NSFG…VQSN) and 355 to 446 (ASMH…DQLN). The span at 319-333 (RRSTPPNEYQTVQSN) shows a compositional bias: polar residues. Thr322 is modified (phosphothreonine). The span at 358-394 (HSQQQQQLHQQQQHQQQYHQQPLQQHPSQSQLQIQQQ) shows a compositional bias: low complexity. Positions 404–419 (QAKEKTNVESKADERG) are enriched in basic and acidic residues. 6 positions are modified to phosphoserine: Ser422, Ser431, Ser441, Ser460, Ser463, and Ser466. A compositionally biased stretch (polar residues) spans 432-446 (QLTIENFGGSQDQLN). The tract at residues 486 to 589 (LQLGYDTDSG…SMPASPAAWQ (104 aa)) is disordered. Position 492 is a phosphothreonine (Thr492). Phosphoserine occurs at positions 494, 496, 513, and 530. Residues 495 to 507 (GSEKQDRETEKYS) are compositionally biased toward basic and acidic residues. A compositionally biased stretch (polar residues) spans 513–529 (SVDNVPTVSSHNLSNAG). Low complexity predominate over residues 576–587 (SSTSSMPASPAA). The stretch at 601–639 (ENASKLSTIRMKLEEKRRRIEQDKRKIEMALLRHQEKED) forms a coiled coil. 7 disordered regions span residues 726-753 (VSAY…PMPM), 872-967 (QQHQ…GMPM), 1005-1042 (DFVH…YDSG), 1055-1186 (NLTY…NKYT), 1200-1241 (GAMS…NAEA), 1284-1315 (EAKA…EEQM), and 1335-1459 (EREG…GVER). 2 stretches are compositionally biased toward low complexity: residues 738–750 (PYQQ…QQQP) and 872–896 (QQHQ…SPGS). Residues 902 to 914 (NGGGGGGGGGGGE) show a composition bias toward gly residues. Polar residues predominate over residues 919–947 (FQVQASPQHGQRQVSGSNGVQRQQSLTNL). 2 stretches are compositionally biased toward low complexity: residues 956-967 (PQNMGMPMGMPM) and 1008-1036 (HQQQ…GSSS). Phosphoserine occurs at positions 1034, 1035, 1036, and 1067. The span at 1065-1074 (RPSIQANSFQ) shows a compositional bias: polar residues. A compositionally biased stretch (basic residues) spans 1105 to 1116 (RPKPPLRAKRSP). The span at 1167–1184 (GLNNSNSVKSPGNATYNK) shows a compositional bias: polar residues. Over residues 1218–1230 (QSPQQTQQPMSPT) the composition is skewed to low complexity. Phosphoserine is present on residues Ser1219 and Ser1228. Residues 1277–1343 (QRRQQQEEAK…AEREGKTLDR (67 aa)) adopt a coiled-coil conformation. Over residues 1335-1348 (EREGKTLDRPDLHV) the composition is skewed to basic and acidic residues. Positions 1363-1374 (RQQRTTRPRPKT) are enriched in basic residues. Residues 1382-1400 (VDISEASSISSRGKKGSSS) are compositionally biased toward low complexity. Phosphoserine occurs at positions 1398, 1399, and 1400. Polar residues predominate over residues 1401–1412 (NLTGYGQLSSNS). Basic and acidic residues predominate over residues 1450 to 1459 (TSREPAGVER). Residues 1489–1623 (GPKLYKQPAA…QGKRVQLPSK (135 aa)) form the CKK domain.

Belongs to the CAMSAP1 family. Interacts with msps. Associates with the minus end of the microtubules.

The protein resides in the cytoplasm. It is found in the cytoskeleton. Its subcellular location is the microtubule organizing center. The protein localises to the spindle pole body. It localises to the centrosome. The protein resides in the perinuclear region. In terms of biological role, key microtubule-organizing protein that specifically binds the minus-end of microtubules and regulates their dynamics and organization. Involved in mitotic spindle assembly. Regulates microtubule (MT) severing. Antagonizes the activity of the kinesin-13 depolymerase Klp10A thereby switching off the depolymerization of the MTs at their pole-associated minus ends, which turns off poleward flux and induces anaphase B spindle elongation. Involved in asymmetric cell division of sensory organ precursor (SOP) cells by playing a role in the asymmetric localization of Sara-expressing endosomes to the pIIa daughter cell but not to the pIIb cell. Klp98A targets Sara-expressing endosomes to the central spindle which is symmetrically arranged in early cell division. During late cytokinesis, central spindle asymmetry is generated by enrichment of Patronin on the pIIb side which protects microtubules from depolymerization by Klp10A while unprotected microtubules on the pIIa side are disassembled by Klp10A, leading to the asymmetric delivery of Sara-expressing endosomes to the pIIa daughter cell. In fat body cells, part of perinuclear non-centrosomal microtubule-organizing centers (ncMTOCs) which function to accommodate the organization of microtubule (MT) networks to control nuclear positioning and dynein motor-based retrograde endosomal trafficking. Within the ncMTOC, Msp300 and shot anchors the ncMTOC at the nuclear surface and recruits the MT minus-end regulators Patronin and Nin for assembly, anchoring and/or stabilization of circumferential and radial MTs at the ncMTOCs. This protein, and perhaps Nin, recruits msps to the ncMTOC for the gamma-tubulin-independent elongation of radial MTs. The protein is Patronin (Patronin) of Drosophila melanogaster (Fruit fly).